We begin with the raw amino-acid sequence, 151 residues long: UPF0178 protein Tcr_1995 (151 aa).

A disordered region spans residues 116–135; it reads RSSGVDTGGPPPLNQKDRQA.

This sequence belongs to the UPF0178 family.

This is UPF0178 protein Tcr_1995 from Hydrogenovibrio crunogenus (strain DSM 25203 / XCL-2) (Thiomicrospira crunogena).